We begin with the raw amino-acid sequence, 132 residues long: Small ribosomal subunit protein uS11 (132 aa).

The protein belongs to the universal ribosomal protein uS11 family. Part of the 30S ribosomal subunit. Interacts with proteins S7 and S18. Binds to IF-3.

In terms of biological role, located on the platform of the 30S subunit, it bridges several disparate RNA helices of the 16S rRNA. Forms part of the Shine-Dalgarno cleft in the 70S ribosome. This is Small ribosomal subunit protein uS11 from Oenococcus oeni (strain ATCC BAA-331 / PSU-1).